Reading from the N-terminus, the 474-residue chain is Synaptotagmin-17 (474 aa).

The disordered stretch occupies residues 60-112 (WLMASRSSDKDGDSVHTASEVPLTPRTNSPDGRRSSSDTSKSTYSLTRRISSL). The segment covering 96-112 (SDTSKSTYSLTRRISSL) has biased composition (low complexity). A phosphoserine mark is found at Ser118 and Ser119. 2 C2 domains span residues 184–310 (QLGM…HWWK) and 321–455 (ELGE…EQWH).

It belongs to the synaptotagmin family. Expressed abundantly in brain (frontal and temporal lobes, hippocampus, hypothalamus, amygdala, substantia nigra, and pituitary), kidney, and prostate. Expressed in fetal brain, kidney and lung. Expressed in melanocytes.

The protein localises to the membrane. Plays a role in dendrite formation by melanocytes. This Homo sapiens (Human) protein is Synaptotagmin-17 (SYT17).